The sequence spans 322 residues: MLNVQRGLHTTVRLSARTKYTKPKPKPQARVIKSEPSQVTHHDNNLKIRAPIPPSAKNIVCPEDHPLWQFFADKKFLRDRADLDNHSRPWTIPELRRKSFEDLHSLWYTSLKERNILARENHLLKTAVESSDDSFEKVADKVRTTMWRIRHVLSERDWSYRIANEAFVEEVDSFVQEFEKDFLLLSQDEDEEAFEQLSRFQKSIFGISEFIDENVVNKRFIDGMKLIANLKVKKFSERNNDIKTFLDQTPNNKITDAGEAFLVFTCENTEKDVKEACEAVLELRNNGNAVSRYDELDTVAEYVNRLAQAQSQATQPVSEQSS.

The interval 1–44 (MLNVQRGLHTTVRLSARTKYTKPKPKPQARVIKSEPSQVTHHDN) is disordered.

Belongs to the universal ribosomal protein uL29 family. In terms of assembly, component of the mitochondrial large ribosomal subunit. Mature mitochondrial ribosomes consist of a small (37S) and a large (54S) subunit. The 37S subunit contains at least 33 different proteins and 1 molecule of RNA (15S). The 54S subunit contains at least 45 different proteins and 1 molecule of RNA (21S).

The protein localises to the mitochondrion. This is Large ribosomal subunit protein uL29m (MRPL4) from Vanderwaltozyma polyspora (strain ATCC 22028 / DSM 70294 / BCRC 21397 / CBS 2163 / NBRC 10782 / NRRL Y-8283 / UCD 57-17) (Kluyveromyces polysporus).